Consider the following 337-residue polypeptide: Transaldolase (337 aa).

Positions M1 to R10 match the Nuclear localization signal motif. The active-site Schiff-base intermediate with substrate is K142. The residue at position 219 (K219) is an N6-acetyllysine. Phosphoserine is present on residues S237 and S256. K269, K286, and K321 each carry N6-acetyllysine.

It belongs to the transaldolase family. Type 1 subfamily. As to quaternary structure, homodimer. Interacts with KPNA1 and KPNA4.

The protein resides in the nucleus. It is found in the cytoplasm. It catalyses the reaction D-sedoheptulose 7-phosphate + D-glyceraldehyde 3-phosphate = D-erythrose 4-phosphate + beta-D-fructose 6-phosphate. Its pathway is carbohydrate degradation; pentose phosphate pathway; D-glyceraldehyde 3-phosphate and beta-D-fructose 6-phosphate from D-ribose 5-phosphate and D-xylulose 5-phosphate (non-oxidative stage): step 2/3. Functionally, catalyzes the rate-limiting step of the non-oxidative phase in the pentose phosphate pathway. Catalyzes the reversible conversion of sedheptulose-7-phosphate and D-glyceraldehyde 3-phosphate into erythrose-4-phosphate and beta-D-fructose 6-phosphate. The sequence is that of Transaldolase (TALDO1) from Sus scrofa (Pig).